A 448-amino-acid polypeptide reads, in one-letter code: Phosphoglucosamine mutase (448 aa).

Ser102 functions as the Phosphoserine intermediate in the catalytic mechanism. Ser102, Asp243, Asp245, and Asp247 together coordinate Mg(2+). Ser102 is subject to Phosphoserine.

This sequence belongs to the phosphohexose mutase family. Mg(2+) serves as cofactor. Post-translationally, activated by phosphorylation.

The catalysed reaction is alpha-D-glucosamine 1-phosphate = D-glucosamine 6-phosphate. Its function is as follows. Catalyzes the conversion of glucosamine-6-phosphate to glucosamine-1-phosphate. The polypeptide is Phosphoglucosamine mutase (Mycobacterium bovis (strain ATCC BAA-935 / AF2122/97)).